Consider the following 148-residue polypeptide: MEQTFIMIKPDGVQRGLVGEIISRFEKKGFSLKALKFVNVDRPFAEKHYADLSAKPFFNGLVEYIVSGPVVAMVWEGKGVVATGRKLIGATNPLASEPGTIRGDFAIDIGRNVIHGSDAVDSATKEIALWFPDGVVHWQSSLHSWIYE.

ATP is bound by residues Lys9, Phe57, Arg85, Thr91, Arg102, and Asn112. Residue His115 is the Pros-phosphohistidine intermediate of the active site.

This sequence belongs to the NDK family. Requires Mg(2+) as cofactor. The N-terminus is blocked.

The catalysed reaction is a 2'-deoxyribonucleoside 5'-diphosphate + ATP = a 2'-deoxyribonucleoside 5'-triphosphate + ADP. The enzyme catalyses a ribonucleoside 5'-diphosphate + ATP = a ribonucleoside 5'-triphosphate + ADP. Its function is as follows. Major role in the synthesis of nucleoside triphosphates other than ATP. The ATP gamma phosphate is transferred to the NDP beta phosphate via a ping-pong mechanism, using a phosphorylated active-site intermediate. The protein is Nucleoside diphosphate kinase 1 (NDPK1) of Spinacia oleracea (Spinach).